The sequence spans 447 residues: GTPase Der (447 aa).

EngA-type G domains are found at residues 3–167 and 180–353; these read PVIA…ALPE and IRLA…KSAN. GTP is bound by residues 9 to 16, 56 to 60, 119 to 122, 186 to 193, 233 to 237, and 298 to 301; these read GRPNVGKS, DTGGF, NKAE, DTAGL, and NKWD. Residues 354–438 form the KH-like domain; sequence RKMPTPVLTR…PLRIEMKTSS (85 aa).

It belongs to the TRAFAC class TrmE-Era-EngA-EngB-Septin-like GTPase superfamily. EngA (Der) GTPase family. Associates with the 50S ribosomal subunit.

GTPase that plays an essential role in the late steps of ribosome biogenesis. This chain is GTPase Der, found in Acidovorax sp. (strain JS42).